Here is a 343-residue protein sequence, read N- to C-terminus: Anthranilate phosphoribosyltransferase (343 aa).

Residues G84, 87-88 (GD), T92, 94-97 (NIST), 112-120 (KHGNRGVSS), and S124 each bind 5-phospho-alpha-D-ribose 1-diphosphate. G84 is a binding site for anthranilate. Position 96 (S96) interacts with Mg(2+). N115 provides a ligand contact to anthranilate. R170 lines the anthranilate pocket. The Mg(2+) site is built by D229 and E230.

It belongs to the anthranilate phosphoribosyltransferase family. Homodimer. Mg(2+) is required as a cofactor.

It catalyses the reaction N-(5-phospho-beta-D-ribosyl)anthranilate + diphosphate = 5-phospho-alpha-D-ribose 1-diphosphate + anthranilate. It participates in amino-acid biosynthesis; L-tryptophan biosynthesis; L-tryptophan from chorismate: step 2/5. Functionally, catalyzes the transfer of the phosphoribosyl group of 5-phosphorylribose-1-pyrophosphate (PRPP) to anthranilate to yield N-(5'-phosphoribosyl)-anthranilate (PRA). This is Anthranilate phosphoribosyltransferase from Burkholderia thailandensis (strain ATCC 700388 / DSM 13276 / CCUG 48851 / CIP 106301 / E264).